A 261-amino-acid chain; its full sequence is MLTEQIIQSLRAVREQKPLVVNITNYVVMNNTANALLAIGASPIMAHSKQELAEMMSFSGALVINIGTLDSVWTPRMCFAVEQANANNKVVVLDPVGCGASTLRTETSREIARLADKLIIRGNASEIIALAGEQAQSKGVDALDSSDAALGAAQCLVAEYGANVVISGETDYVVTKDSVVTLNNGHPMMPYVTGMGCTLTALTGAFAAVGDESGLAAAAVLGVVGEISAESSRGPGSLQMNLLDELYQLDEETLIQRLKVQ.

Methionine 45 provides a ligand contact to substrate. Residues arginine 121 and serine 167 each contribute to the ATP site. A substrate-binding site is contributed by glycine 194.

This sequence belongs to the Thz kinase family. Requires Mg(2+) as cofactor.

It carries out the reaction 5-(2-hydroxyethyl)-4-methylthiazole + ATP = 4-methyl-5-(2-phosphooxyethyl)-thiazole + ADP + H(+). The protein operates within cofactor biosynthesis; thiamine diphosphate biosynthesis; 4-methyl-5-(2-phosphoethyl)-thiazole from 5-(2-hydroxyethyl)-4-methylthiazole: step 1/1. In terms of biological role, catalyzes the phosphorylation of the hydroxyl group of 4-methyl-5-beta-hydroxyethylthiazole (THZ). In Vibrio atlanticus (strain LGP32) (Vibrio splendidus (strain Mel32)), this protein is Hydroxyethylthiazole kinase.